Here is a 257-residue protein sequence, read N- to C-terminus: Lipid A 4'-phosphatase (257 aa).

6 consecutive transmembrane segments (helical) span residues phenylalanine 21–phenylalanine 41, isoleucine 85–tyrosine 105, lysine 119–leucine 139, cysteine 174–valine 194, alanine 201–glycine 221, and leucine 225–leucine 245.

It belongs to the lipid A LpxF 4'-phosphatase family.

Its subcellular location is the cell inner membrane. Its pathway is bacterial outer membrane biogenesis; LPS lipid A biosynthesis. In terms of biological role, probably removes the 4'-phosphate moiety from lipid A species. Not seen to act on other membrane components, nor does it dephosphorylate the 1-phosphate group of lipid A and/or lipid A precursors. This is Lipid A 4'-phosphatase from Rhizobium etli (strain ATCC 51251 / DSM 11541 / JCM 21823 / NBRC 15573 / CFN 42).